The chain runs to 886 residues: Leucine--tRNA ligase (886 aa).

The short motif at 46-56 is the 'HIGH' region element; it reads PYPSGKLHMGH. The short motif at 638-642 is the 'KMSKS' region element; sequence TMSKS. Position 641 (K641) interacts with ATP.

Belongs to the class-I aminoacyl-tRNA synthetase family.

The protein resides in the cytoplasm. It catalyses the reaction tRNA(Leu) + L-leucine + ATP = L-leucyl-tRNA(Leu) + AMP + diphosphate. The chain is Leucine--tRNA ligase from Polaromonas sp. (strain JS666 / ATCC BAA-500).